Reading from the N-terminus, the 41-residue chain is Photosystem II reaction center protein J (41 aa).

The chain crosses the membrane as a helical span at residues 9-29; it reads IPLWFVGMVGGLAALGLLAIF.

This sequence belongs to the PsbJ family. PSII is composed of 1 copy each of membrane proteins PsbA, PsbB, PsbC, PsbD, PsbE, PsbF, PsbH, PsbI, PsbJ, PsbK, PsbL, PsbM, PsbT, PsbX, PsbY, PsbZ, Psb30/Ycf12, at least 3 peripheral proteins of the oxygen-evolving complex and a large number of cofactors. It forms dimeric complexes.

Its subcellular location is the plastid. The protein localises to the chloroplast thylakoid membrane. One of the components of the core complex of photosystem II (PSII). PSII is a light-driven water:plastoquinone oxidoreductase that uses light energy to abstract electrons from H(2)O, generating O(2) and a proton gradient subsequently used for ATP formation. It consists of a core antenna complex that captures photons, and an electron transfer chain that converts photonic excitation into a charge separation. The sequence is that of Photosystem II reaction center protein J from Ostreococcus tauri.